A 140-amino-acid chain; its full sequence is Sex-regulated protein janus-B (140 aa).

R42 lines the substrate pocket. H69 functions as the Proton acceptor in the catalytic mechanism. A substrate-binding site is contributed by 110–112 (SRT).

It belongs to the janus family.

Its function is as follows. JanA and janB regulate somatic sex differentiation. This chain is Sex-regulated protein janus-B (janB), found in Drosophila yakuba (Fruit fly).